Here is a 185-residue protein sequence, read N- to C-terminus: Pectinesterase inhibitor (185 aa).

A signal peptide spans 1-32 (MAFSYCSSSLFVSLLLVILFISPLSQRPSVKA). Cystine bridges form between C41-C50 and C106-C146. Residue K185 is a propeptide.

The protein belongs to the PMEI family. In terms of tissue distribution, fruit.

It localises to the cytoplasm. Functionally, inhibits pectin methylesterase; may be involved in the regulation of fruit ripening. The chain is Pectinesterase inhibitor (PMEI) from Actinidia deliciosa (Kiwi).